Reading from the N-terminus, the 430-residue chain is MEHQGWSFEENYSLSTNRRSIRPQDELVELLWRDGQVVLQSQTHREQTQTQKQDHHEEALRSSTFLEDQETVSWIQYPPDEDPFEPDDFSSHFFSTMDPLQRPTSETVKPKSSPEPPQVMVKPKACPDPPPQVMPPPKFRLTNSSSGIRETEMEQYSVTTVGPSHCGSNPSQNDLDVSMSHDRSKNIEEKLNPNASSSSGGSSGCSFGKDIKEMASGRCITTDRKRKRINHTDESVSLSDAIGNKSNQRSGSNRRSRAAEVHNLSERRRRDRINERMKALQELIPHCSKTDKASILDEAIDYLKSLQLQLQVMWMGSGMAAAAASAPMMFPGVQPQQFIRQIQSPVQLPRFPVMDQSAIQNNPGLVCQNPVQNQIISDRFARYIGGFPHMQAATQMQPMEMLRFSSPAGQQSQQPSSVPTKTTDGSRLDH.

5 disordered regions span residues 42–71 (QTHREQTQTQKQDHHEEALRSSTFLEDQET), 97–136 (MDPLQRPTSETVKPKSSPEPPQVMVKPKACPDPPPQVMPP), 160–183 (TVGPSHCGSNPSQNDLDVSMSHDR), 223–266 (DRKR…NLSE), and 405–430 (SSPAGQQSQQPSSVPTKTTDGSRLDH). Positions 43-60 (THREQTQTQKQDHHEEAL) are enriched in basic and acidic residues. Positions 61–71 (RSSTFLEDQET) are enriched in polar residues. The segment covering 126 to 136 (CPDPPPQVMPP) has biased composition (pro residues). The segment covering 160 to 175 (TVGPSHCGSNPSQNDL) has biased composition (polar residues). The span at 244–253 (NKSNQRSGSN) shows a compositional bias: low complexity. The segment covering 257-266 (RAAEVHNLSE) has biased composition (basic and acidic residues). Positions 257-306 (RAAEVHNLSERRRRDRINERMKALQELIPHCSKTDKASILDEAIDYLKSL) constitute a bHLH domain. Residues 405–419 (SSPAGQQSQQPSSVP) are compositionally biased toward low complexity.

Belongs to the bHLH protein family. In terms of assembly, interacts preferentially with the Pfr form of phytochrome B (phyB). Binds DNA as a homodimer, but once bound to DNA, loses its capacity to interact with phyB. Interacts with APRR1/TOC1 and PIF3. Binds to RGL2 and RGA. Forms non-functional heterodimer with HFR1. Interacts with PHYB, CRY1 and CRY2 in the nucleus in response to low blue light (LBL). Interacts with FYPP1 and FYPP3. Associates to PTAC12/HMR/PAP5, which acts as a transcriptional coactivator to trigger the thermoresponsive growth-relevant genes and promote warm-temperature-dependent PIF4 accumulation. Interacts with MED14. As to expression, mainly expressed in leaves, stems and seedlings, and, to a lower extent, in fruits, flowers and roots.

It is found in the nucleus. Its function is as follows. Transcription factor acting negatively in the phytochrome B signaling pathway. May regulate the expression of a subset of genes involved in cell expansion by binding to the G-box motif. Activated by CRY1 and CRY2 in response to low blue light (LBL) by direct binding at chromatin on E-box variant 5'-CA[CT]GTG-3' to stimulate specific gene expression to adapt global physiology (e.g. hypocotyl elongation in low blue light). Element of a PIF4/HMR/MED14-dependent thermoresponsive process; collaboratively with its transcriptional coactivator PTAC12/HMR/PAP5, involved in the regulation of thermoresponsive growth-relevant genes (e.g. mainly involved in biosynthesis and signaling of the phytohormone auxin) leading to daytime warm temperature elicitation of MED14-dependent thermomorphogenesis (e.g. hypocotyl elongation). The polypeptide is Transcription factor PIF4 (Arabidopsis thaliana (Mouse-ear cress)).